The primary structure comprises 302 residues: Oligopeptide transport system permease protein OppC (302 aa).

Topologically, residues 1–38 (MMLSKKNSETLENFSEKLEVEGRSLWQDARRRFMHNRA) are cytoplasmic. A helical membrane pass occupies residues 39–59 (AVASLIVLVLIALFVILAPML). Residues 60–102 (SQFAYDDTDWAMMSSAPDMESGHYFGTDSSGRDLLVRVAIGGR) lie on the Periplasmic side of the membrane. The ABC transmembrane type-1 domain maps to 101–290 (GRISLMVGVA…VTLFCFNFIG (190 aa)). The chain crosses the membrane as a helical span at residues 103 to 123 (ISLMVGVAAALVAVVVGTLYG). Over 124–137 (SLSGYLGGKVDSVM) the chain is Cytoplasmic. The chain crosses the membrane as a helical span at residues 138 to 160 (MRLLEILNSFPFMFFVILLVTFF). Topologically, residues 161–163 (GQN) are periplasmic. A helical transmembrane segment spans residues 164–183 (ILLIFVAIGMVSWLDMARIV). The Cytoplasmic portion of the chain corresponds to 184–213 (RGQTLSLKRKEFIEAAQVGGVSTSGIVIRH). Residues 214–234 (IVPNVLGVVVVYASLLVPSMI) form a helical membrane-spanning segment. Topologically, residues 235–269 (LFESFLSFLGLGTQEPLSSWGALLSDGANSMEVSP) are periplasmic. The helical transmembrane segment at 270–290 (WLLLFPAGFLVVTLFCFNFIG) threads the bilayer. Topologically, residues 291–302 (DGLRDALDPKDR) are cytoplasmic.

This sequence belongs to the binding-protein-dependent transport system permease family. OppBC subfamily. The complex is composed of two ATP-binding proteins (OppD and OppF), two transmembrane proteins (OppB and OppC) and a solute-binding protein (OppA).

It is found in the cell inner membrane. Functionally, part of the ABC transporter complex OppABCDF involved in the uptake of oligopeptides. Probably responsible for the translocation of the substrate across the membrane. This Escherichia coli O157:H7 protein is Oligopeptide transport system permease protein OppC (oppC).